We begin with the raw amino-acid sequence, 175 residues long: Ribosome-binding factor A (175 aa).

The segment at 131–175 (KPAGEADPYRDRGSVDEPSDAGGLVIRTSDGLEAENTGDDYQAED) is disordered. Positions 162–175 (LEAENTGDDYQAED) are enriched in acidic residues.

Belongs to the RbfA family. Monomer. Binds 30S ribosomal subunits, but not 50S ribosomal subunits or 70S ribosomes.

Its subcellular location is the cytoplasm. In terms of biological role, one of several proteins that assist in the late maturation steps of the functional core of the 30S ribosomal subunit. Associates with free 30S ribosomal subunits (but not with 30S subunits that are part of 70S ribosomes or polysomes). Required for efficient processing of 16S rRNA. May interact with the 5'-terminal helix region of 16S rRNA. This is Ribosome-binding factor A from Mycobacterium ulcerans (strain Agy99).